The primary structure comprises 731 residues: Lanosterol synthase ERG7 (731 aa).

At Thr-2 the chain carries N-acetylthreonine. Residues 125-167 (RIELIRYIVNTAHPVDGGWGLHSVDKSTVFGTVLNYVILRLLG) form a PFTB 1 repeat. Asp-456 serves as the catalytic Proton donor. The PFTB 2 repeat unit spans residues 615-661 (VRKGCDFLVSKQMKDGGWGESMKSSELHSYVDSEKSLVVQTAWALIA).

This sequence belongs to the terpene cyclase/mutase family.

Its subcellular location is the lipid droplet. The protein resides in the endoplasmic reticulum membrane. It catalyses the reaction (S)-2,3-epoxysqualene = lanosterol. Its pathway is terpene metabolism; lanosterol biosynthesis; lanosterol from farnesyl diphosphate: step 3/3. With respect to regulation, catalytic activity requires the presence of ERG27. Lanosterol synthase; part of the third module of ergosterol biosynthesis pathway that includes the late steps of the pathway. ERG7 catalyzes the cyclization of (S)-2,3 oxidosqualene to lanosterol, a reaction that forms the sterol core. The third module or late pathway involves the ergosterol synthesis itself through consecutive reactions that mainly occur in the endoplasmic reticulum (ER) membrane. Firstly, the squalene synthase ERG9 catalyzes the condensation of 2 farnesyl pyrophosphate moieties to form squalene, which is the precursor of all steroids. Squalene synthase is crucial for balancing the incorporation of farnesyl diphosphate (FPP) into sterol and nonsterol isoprene synthesis. Secondly, the squalene epoxidase ERG1 catalyzes the stereospecific oxidation of squalene to (S)-2,3-epoxysqualene, which is considered to be a rate-limiting enzyme in steroid biosynthesis. Then, the lanosterol synthase ERG7 catalyzes the cyclization of (S)-2,3 oxidosqualene to lanosterol, a reaction that forms the sterol core. In the next steps, lanosterol is transformed to zymosterol through a complex process involving various demethylation, reduction and desaturation reactions. The lanosterol 14-alpha-demethylase ERG11 (also known as CYP51) catalyzes C14-demethylation of lanosterol to produce 4,4'-dimethyl cholesta-8,14,24-triene-3-beta-ol, which is critical for ergosterol biosynthesis. The C-14 reductase ERG24 reduces the C14=C15 double bond of 4,4-dimethyl-cholesta-8,14,24-trienol to produce 4,4-dimethyl-cholesta-8,24-dienol. 4,4-dimethyl-cholesta-8,24-dienol is substrate of the C-4 demethylation complex ERG25-ERG26-ERG27 in which ERG25 catalyzes the three-step monooxygenation required for the demethylation of 4,4-dimethyl and 4alpha-methylsterols, ERG26 catalyzes the oxidative decarboxylation that results in a reduction of the 3-beta-hydroxy group at the C-3 carbon to an oxo group, and ERG27 is responsible for the reduction of the keto group on the C-3. ERG28 has a role as a scaffold to help anchor ERG25, ERG26 and ERG27 to the endoplasmic reticulum and ERG29 regulates the activity of the iron-containing C4-methylsterol oxidase ERG25. Then, the sterol 24-C-methyltransferase ERG6 catalyzes the methyl transfer from S-adenosyl-methionine to the C-24 of zymosterol to form fecosterol. The C-8 sterol isomerase ERG2 catalyzes the reaction which results in unsaturation at C-7 in the B ring of sterols and thus converts fecosterol to episterol. The sterol-C5-desaturase ERG3 then catalyzes the introduction of a C-5 double bond in the B ring to produce 5-dehydroepisterol. The C-22 sterol desaturase ERG5 further converts 5-dehydroepisterol into ergosta-5,7,22,24(28)-tetraen-3beta-ol by forming the C-22(23) double bond in the sterol side chain. Finally, ergosta-5,7,22,24(28)-tetraen-3beta-ol is substrate of the C-24(28) sterol reductase ERG4 to produce ergosterol. The polypeptide is Lanosterol synthase ERG7 (Saccharomyces cerevisiae (strain ATCC 204508 / S288c) (Baker's yeast)).